The sequence spans 571 residues: Hemagglutinin-neuraminidase (571 aa).

The Intravirion portion of the chain corresponds to 1–26 (MDRAVGRVALENEEREAKNTWRFVFR). Residues 27 to 47 (IAIFLLIVITLAISAAALVYS) traverse the membrane as a helical segment. The Virion surface portion of the chain corresponds to 48-571 (MEASTPGDLV…LVEILKEDGV (524 aa)). Residue Asn-119 is glycosylated (N-linked (GlcNAc...) asparagine; by host). Positions 124–152 (GAPVHDPDYIGGIGKELIVDDASDVTSFY) are important for interaction with fusion/F protein. Intrachain disulfides connect Cys-172-Cys-196, Cys-186-Cys-247, and Cys-238-Cys-251. The tract at residues 234–239 (NRKSCS) is involved in neuraminidase activity. Asn-341 and Asn-433 each carry an N-linked (GlcNAc...) asparagine; by host glycan. Cystine bridges form between Cys-344/Cys-461 and Cys-455/Cys-465. 3 N-linked (GlcNAc...) asparagine; by host glycosylation sites follow: Asn-481, Asn-508, and Asn-538. An intrachain disulfide couples Cys-531 to Cys-542.

The protein belongs to the paramyxoviruses hemagglutinin-neuraminidase family. Homotetramer; composed of disulfide-linked homodimers. Interacts with F protein trimer. Interacts with host CG-1B; this interaction inhibits viral adsorption and replication rather than internalization.

It localises to the virion membrane. Its subcellular location is the host cell membrane. It catalyses the reaction Hydrolysis of alpha-(2-&gt;3)-, alpha-(2-&gt;6)-, alpha-(2-&gt;8)- glycosidic linkages of terminal sialic acid residues in oligosaccharides, glycoproteins, glycolipids, colominic acid and synthetic substrates.. Its function is as follows. Mediates the viral entry into the host cell together with fusion/F protein. Attaches the virus to sialic acid-containing cell receptors and thereby initiates infection. Binding of HN protein to the receptor induces a conformational change that allows the F protein to trigger virion/cell membranes fusion. In terms of biological role, neuraminidase activity ensures the efficient spread of the virus by dissociating the mature virions from the neuraminic acid containing glycoproteins. The protein is Hemagglutinin-neuraminidase (HN) of Gallus gallus (Chicken).